A 106-amino-acid chain; its full sequence is Large ribosomal subunit protein uL24 (106 aa).

This sequence belongs to the universal ribosomal protein uL24 family. In terms of assembly, part of the 50S ribosomal subunit.

Its function is as follows. One of two assembly initiator proteins, it binds directly to the 5'-end of the 23S rRNA, where it nucleates assembly of the 50S subunit. Functionally, one of the proteins that surrounds the polypeptide exit tunnel on the outside of the subunit. The polypeptide is Large ribosomal subunit protein uL24 (Orientia tsutsugamushi (strain Boryong) (Rickettsia tsutsugamushi)).